Here is a 184-residue protein sequence, read N- to C-terminus: MTWRSEHIWIELITGSRKISNFCWAFILFLGSLGFLLVGTSSYLGRNLISFFPPQQIIFFPQGLVMSFYGIAGLFISSYLWCTISWNVGSGYDRFDRKEGIVCIFRWGFPGKNRRIFLRFLIKDIQSVRIEVKEGISARRVLYMDIRGQGSIPLTRTDENLTPREIEQKAAELAYFLRVPIEVF.

The next 2 helical transmembrane spans lie at 19 to 39 and 57 to 77; these read ISNFCWAFILFLGSLGFLLVG and IIFFPQGLVMSFYGIAGLFIS.

The protein belongs to the Ycf4 family.

The protein localises to the plastid. Its subcellular location is the chloroplast thylakoid membrane. In terms of biological role, seems to be required for the assembly of the photosystem I complex. The polypeptide is Photosystem I assembly protein Ycf4 (Nicotiana sylvestris (Wood tobacco)).